Reading from the N-terminus, the 463-residue chain is Nuclear hormone receptor family member nhr-79 (463 aa).

The nuclear receptor DNA-binding region spans 3 to 81; that stretch reads RGKCMVCDSP…AGMMRDLVQA (79 aa). 2 consecutive NR C4-type zinc fingers follow at residues 6–27 and 43–64; these read CMVCDSPNATNYHFGAQSCKAC and CLGDGVHSCKIDHTLRLNCRHC. The disordered stretch occupies residues 83–119; that stretch reads REIKSDKGKNSRNSSQSEDFFSPPPEQPGPSNYFDQF. An NR LBD domain is found at 203 to 463; sequence YTEQVINLNM…ILKDMLKFQY (261 aa).

This sequence belongs to the nuclear hormone receptor family.

Its subcellular location is the nucleus. In terms of biological role, orphan nuclear receptor. The sequence is that of Nuclear hormone receptor family member nhr-79 (nhr-79) from Caenorhabditis elegans.